Reading from the N-terminus, the 87-residue chain is Cytochrome c6 (87 aa).

Heme c-binding residues include Cys10, Cys13, His14, and Met56.

It belongs to the cytochrome c family. PetJ subfamily. As to quaternary structure, monomer. In terms of processing, binds 1 heme c group covalently per subunit.

It is found in the plastid. The protein resides in the chloroplast thylakoid lumen. Functions as an electron carrier between membrane-bound cytochrome b6-f and photosystem I in oxygenic photosynthesis. This Euglena viridis (Cercaria viridis) protein is Cytochrome c6 (petJ).